The sequence spans 79 residues: Sec-independent protein translocase protein TatA (79 aa).

A helical transmembrane segment spans residues 1 to 21; that stretch reads MHMPSGTQWLIILLIVVLLFG.

This sequence belongs to the TatA/E family. As to quaternary structure, the Tat system comprises two distinct complexes: a TatABC complex, containing multiple copies of TatA, TatB and TatC subunits, and a separate TatA complex, containing only TatA subunits. Substrates initially bind to the TatABC complex, which probably triggers association of the separate TatA complex to form the active translocon.

It is found in the cell inner membrane. In terms of biological role, part of the twin-arginine translocation (Tat) system that transports large folded proteins containing a characteristic twin-arginine motif in their signal peptide across membranes. TatA could form the protein-conducting channel of the Tat system. This is Sec-independent protein translocase protein TatA from Campylobacter lari (strain RM2100 / D67 / ATCC BAA-1060).